Consider the following 565-residue polypeptide: Probable transcription factor lepB (565 aa).

A fungal specific transcription factor domain region spans residues Lys-52–Asp-259.

The protein localises to the nucleus. In terms of biological role, probable transcription factor; part of the gene cluster 23 that mediates the biosynthesis of a family of 2-pyridones known as leporins. The chain is Probable transcription factor lepB from Aspergillus flavus (strain ATCC 200026 / FGSC A1120 / IAM 13836 / NRRL 3357 / JCM 12722 / SRRC 167).